The following is a 206-amino-acid chain: Small ribosomal subunit protein uS4 (206 aa).

Positions 96–156 (TRLDNVVYRM…EKSRTQARIK (61 aa)) constitute an S4 RNA-binding domain.

Belongs to the universal ribosomal protein uS4 family. Part of the 30S ribosomal subunit. Contacts protein S5. The interaction surface between S4 and S5 is involved in control of translational fidelity.

Its function is as follows. One of the primary rRNA binding proteins, it binds directly to 16S rRNA where it nucleates assembly of the body of the 30S subunit. In terms of biological role, with S5 and S12 plays an important role in translational accuracy. This is Small ribosomal subunit protein uS4 from Shewanella amazonensis (strain ATCC BAA-1098 / SB2B).